Reading from the N-terminus, the 158-residue chain is Cyclic pyranopterin monophosphate synthase (158 aa).

Substrate is bound by residues 76-78 and 114-115; these read LCH and ME. Residue aspartate 129 is part of the active site.

This sequence belongs to the MoaC family. In terms of assembly, homohexamer; trimer of dimers.

The enzyme catalyses (8S)-3',8-cyclo-7,8-dihydroguanosine 5'-triphosphate = cyclic pyranopterin phosphate + diphosphate. It participates in cofactor biosynthesis; molybdopterin biosynthesis. Functionally, catalyzes the conversion of (8S)-3',8-cyclo-7,8-dihydroguanosine 5'-triphosphate to cyclic pyranopterin monophosphate (cPMP). This chain is Cyclic pyranopterin monophosphate synthase, found in Shewanella baltica (strain OS223).